We begin with the raw amino-acid sequence, 189 residues long: Small ribosomal subunit protein uS5 (189 aa).

The 64-residue stretch at 20 to 83 (FMDRLVHINR…ESAKRSLIRV (64 aa)) folds into the S5 DRBM domain.

The protein belongs to the universal ribosomal protein uS5 family. As to quaternary structure, part of the 30S ribosomal subunit. Contacts proteins S4 and S8.

With S4 and S12 plays an important role in translational accuracy. Its function is as follows. Located at the back of the 30S subunit body where it stabilizes the conformation of the head with respect to the body. This is Small ribosomal subunit protein uS5 from Methylocella silvestris (strain DSM 15510 / CIP 108128 / LMG 27833 / NCIMB 13906 / BL2).